A 225-amino-acid polypeptide reads, in one-letter code: Uracil-DNA glycosylase (225 aa).

Asp65 functions as the Proton acceptor in the catalytic mechanism.

It belongs to the uracil-DNA glycosylase (UDG) superfamily. UNG family.

The protein resides in the cytoplasm. It carries out the reaction Hydrolyzes single-stranded DNA or mismatched double-stranded DNA and polynucleotides, releasing free uracil.. Functionally, excises uracil residues from the DNA which can arise as a result of misincorporation of dUMP residues by DNA polymerase or due to deamination of cytosine. The chain is Uracil-DNA glycosylase from Bacillus anthracis (strain A0248).